Here is a 55-residue protein sequence, read N- to C-terminus: Ferredoxin (55 aa).

2 4Fe-4S ferredoxin-type domains span residues 2 to 27 and 28 to 55; these read YFIT…SPGD and SVYV…PQQK. 8 residues coordinate [4Fe-4S] cluster: C8, C11, C14, C18, C37, C40, C43, and C47.

[4Fe-4S] cluster is required as a cofactor.

Functionally, ferredoxins are iron-sulfur proteins that transfer electrons in a wide variety of metabolic reactions. The polypeptide is Ferredoxin (Acetivibrio thermocellus (Hungateiclostridium thermocellum)).